We begin with the raw amino-acid sequence, 148 residues long: Putative ankyrin repeat protein RF_1158 (148 aa).

The stretch at 82–115 (RPTTALGIAIAQGNSEEVIKYLLANGADPKLAFD) is one ANK repeat.

This Rickettsia felis (strain ATCC VR-1525 / URRWXCal2) (Rickettsia azadi) protein is Putative ankyrin repeat protein RF_1158.